We begin with the raw amino-acid sequence, 156 residues long: 6,7-dimethyl-8-ribityllumazine synthase (156 aa).

Residues phenylalanine 22, 56-58 (AFE), and 80-82 (AVI) contribute to the 5-amino-6-(D-ribitylamino)uracil site. 85-86 (ST) contacts (2S)-2-hydroxy-3-oxobutyl phosphate. Histidine 88 serves as the catalytic Proton donor. Phenylalanine 113 provides a ligand contact to 5-amino-6-(D-ribitylamino)uracil. Arginine 127 provides a ligand contact to (2S)-2-hydroxy-3-oxobutyl phosphate.

It belongs to the DMRL synthase family.

It catalyses the reaction (2S)-2-hydroxy-3-oxobutyl phosphate + 5-amino-6-(D-ribitylamino)uracil = 6,7-dimethyl-8-(1-D-ribityl)lumazine + phosphate + 2 H2O + H(+). The protein operates within cofactor biosynthesis; riboflavin biosynthesis; riboflavin from 2-hydroxy-3-oxobutyl phosphate and 5-amino-6-(D-ribitylamino)uracil: step 1/2. Its function is as follows. Catalyzes the formation of 6,7-dimethyl-8-ribityllumazine by condensation of 5-amino-6-(D-ribitylamino)uracil with 3,4-dihydroxy-2-butanone 4-phosphate. This is the penultimate step in the biosynthesis of riboflavin. In Caldicellulosiruptor saccharolyticus (strain ATCC 43494 / DSM 8903 / Tp8T 6331), this protein is 6,7-dimethyl-8-ribityllumazine synthase.